Consider the following 382-residue polypeptide: Layilin (382 aa).

Residues 1–21 (MRPGTALQAVLLAVLLVGLRA) form the signal peptide. The Extracellular portion of the chain corresponds to 22–235 (ATGRLLSASD…SREAALNLAY (214 aa)). A C-type lectin domain is found at 45–185 (TQRPCYKVIY…CNMKNNFICK (141 aa)). Intrachain disulfides connect Cys71–Cys184 and Cys150–Cys176. N-linked (GlcNAc...) asparagine glycosylation occurs at Asn117. The chain crosses the membrane as a helical span at residues 236–256 (ILIPSIPLLLLLVVTTVVCWV). At 257–382 (WICRKRKREQ…GWVENEIYGY (126 aa)) the chain is on the cytoplasmic side. The interval 266–285 (QPDPSTKKQHTIWPSPHQGN) is disordered. Phosphoserine occurs at positions 286 and 299. The tract at residues 330-374 (DYDNMAVNPSESGFVTLVSVESGFVTNDIYEFSPDQMGRSKESGW) is interaction with NF2. Residues 337–382 (NPSESGFVTLVSVESGFVTNDIYEFSPDQMGRSKESGWVENEIYGY) are interaction with TLN1. 5 repeat units span residues 340–344 (ESGFV), 350–354 (ESGFV), 356–359 (NDIY), 371–375 (ESGWV), and 377–380 (NEIY). The 3 X 5 AA repeats of E-S-G-X-V stretch occupies residues 340–375 (ESGFVTLVSVESGFVTNDIYEFSPDQMGRSKESGWV). The tract at residues 356–380 (NDIYEFSPDQMGRSKESGWVENEIY) is 2 X 4 AA repeats of N-X-I-Y.

Interacts with NF2, RDX and TLN1.

The protein resides in the membrane. Receptor for hyaluronate. In Homo sapiens (Human), this protein is Layilin (LAYN).